Here is a 260-residue protein sequence, read N- to C-terminus: Putative ABC transporter substrate-binding lipoprotein YvgL (260 aa).

An N-terminal signal peptide occupies residues 1-20; that stretch reads MFKKYSIFIAALTAFLLVAG. C21 is lipidated: N-palmitoyl cysteine. Residue C21 is the site of S-diacylglycerol cysteine attachment. S43, S71, A151, V178, and Y196 together coordinate molybdate.

It belongs to the bacterial solute-binding protein ModA family.

The protein resides in the cell membrane. The polypeptide is Putative ABC transporter substrate-binding lipoprotein YvgL (yvgL) (Bacillus subtilis (strain 168)).